Here is a 180-residue protein sequence, read N- to C-terminus: uncharacterized protein (180 aa).

A coiled-coil region spans residues 114–147; sequence EDIYEDIVDVRLENQSLEEQLEDFKECSRALKKY.

It belongs to the mimivirus L74/L77/R857 family.

This is an uncharacterized protein from Acanthamoeba polyphaga mimivirus (APMV).